The sequence spans 449 residues: MALTVKEEEFSNTLIKNASAFDRLKLGNLKNLKIQKKLQFLYLILFVLITGVFFFFLIGNFYSHRKLYQVIKNTKHTTIGFKIDRPHDKVLSSVLKNKLSTYVKESFKFFKSGYAQKGYLGSENDSIELDDVANLMFYGEGQIGTNKQPFMFIFDTGSANLWVPSVNCDSIGCSTKHLYDASASKSYEKDGTKVEISYGSGTVRGYFSKDVISLGDLSLPYKFIEVTDADDLEPIYSGSEFDGILGLGWKDLSIGSIDPVVVELKKQNKIDNALFTFYLPVHDKHVGYLTIGGIESDFYEGPLTYEKLNHDLYWQIDLDIHFGKYVMQKANAVVDSGTSTITAPTSFLNKFFRDMNVIKVPFLPLYVTTCDNDDLPTLEFHSRNNKYTLEPEFYMDPLSDIDPALCMLYILPVDIDDNTFILGDPFMRKYFTVFDYEKESVGFAVAKNL.

Residues 1–37 (MALTVKEEEFSNTLIKNASAFDRLKLGNLKNLKIQKK) are Cytoplasmic-facing. The propeptide occupies 1 to 121 (MALTVKEEEF…SGYAQKGYLG (121 aa)). The chain crosses the membrane as a helical; Signal-anchor for type II membrane protein span at residues 38–58 (LQFLYLILFVLITGVFFFFLI). The Lumenal segment spans residues 59 to 449 (GNFYSHRKLY…SVGFAVAKNL (391 aa)). A Peptidase A1 domain is found at 137–444 (FYGEGQIGTN…DYEKESVGFA (308 aa)). Aspartate 155 is a catalytic residue. Cysteines 168 and 173 form a disulfide. Aspartate 335 is a catalytic residue. Cysteines 370 and 406 form a disulfide.

It belongs to the peptidase A1 family. In terms of assembly, component of the hemozoin formation complex (HFC) composed of falcipains FP2A and/or FP2B, plasmepsins PMII, PMIII/HAP and PMIV, heme detoxifying protein HDP and falcilysin FLN. The HFC complex is involved in hemoglobin degradation and detoxification of heme in the food vacuole during the asexual blood stage. In terms of processing, proteolytically cleaved into the soluble active mature form by cysteine proteases in the digestive vacuole of trophozoites. Proteolysis requires an acidic environment. Autoprocessing or transprocessing by other plasmepsins such as PMII may serve as an alternate activation system.

Its subcellular location is the membrane. The protein localises to the vacuole lumen. It catalyses the reaction Hydrolysis of the bonds linking certain hydrophobic residues in hemoglobin or globin. Also cleaves small molecules substrates such as Ala-Leu-Glu-Arg-Thr-Phe-|-Phe(NO2)-Ser-Phe-Pro-Thr.. With respect to regulation, inhibited by KNI derived compounds KNI-10333 and to a lesser extent KNI-10743. Its function is as follows. During the asexual blood stage, catalyzes the cleavage of denatured host hemoglobin (Hb). Digestion of host Hb is an essential step which provides the parasite with amino acids for protein synthesis, and regulates osmolarity. This chain is Plasmepsin IV, found in Plasmodium falciparum (isolate 3D7).